Here is a 444-residue protein sequence, read N- to C-terminus: Orexin receptor type 2 (444 aa).

Residues 1-10 are compositionally biased toward basic and acidic residues; that stretch reads MSGTKLEDSP. The disordered stretch occupies residues 1 to 20; that stretch reads MSGTKLEDSPPCRNWSSASE. Over 1–54 the chain is Extracellular; the sequence is MSGTKLEDSPPCRNWSSASELNETQEPFLNPTDYDDEEFLRYLWREYLHPKEYE. 2 N-linked (GlcNAc...) asparagine glycosylation sites follow: asparagine 14 and asparagine 22. The interval 33–49 is required for response to orexin-A; it reads DYDDEEFLRYLWREYLH. The chain crosses the membrane as a helical span at residues 55–75; the sequence is WVLIAGYIIVFVVALIGNVLV. Residues 76–88 are Cytoplasmic-facing; the sequence is CVAVWKNHHMRTV. A helical membrane pass occupies residues 89–110; it reads TNYFIVNLSLADVLVTITCLPA. The Extracellular portion of the chain corresponds to 111–127; that stretch reads TLVVDITETWFFGQSLC. Residues cysteine 127 and cysteine 210 are joined by a disulfide bond. The chain crosses the membrane as a helical span at residues 128-150; it reads KVIPYLQTVSVSVSVLTLSCIAL. Residues 151–170 are Cytoplasmic-facing; it reads DRWYAICHPLMFKSTAKRAR. Residues 171–191 form a helical membrane-spanning segment; it reads NSIVIIWIVSCIIMIPQAIVM. Residues 192–222 are Extracellular-facing; sequence ECSTVFPGLANKTTLFTVCDERWGGEIYPKM. N-linked (GlcNAc...) asparagine glycosylation occurs at asparagine 202. The helical transmembrane segment at 223–243 threads the bilayer; sequence YHICFFLVTYMAPLCLMVLAY. The Cytoplasmic portion of the chain corresponds to 244–304; sequence LQIFRKLWCR…QIRARRKTAR (61 aa). A helical transmembrane segment spans residues 305 to 326; it reads MLMIVLLVFAICYLPISILNVL. Asparagine 324 contributes to the suvorexant binding site. Residues 327–342 are Extracellular-facing; sequence KRVFGMFAHTEDRETV. The helical transmembrane segment at 343-366 threads the bilayer; sequence YAWFTFSHWLVYANSAANPIIYNF. Residues 367–444 lie on the Cytoplasmic side of the membrane; sequence LSGKFREEFK…ANGAGPLQNW (78 aa).

Belongs to the G-protein coupled receptor 1 family.

The protein resides in the cell membrane. Nonselective, high-affinity receptor for both orexin-A and orexin-B neuropeptides. Triggers an increase in cytoplasmic Ca(2+) levels in response to orexin-A binding. In Homo sapiens (Human), this protein is Orexin receptor type 2 (HCRTR2).